A 240-amino-acid polypeptide reads, in one-letter code: Poxin (240 aa).

Histidine 46 acts as the Proton donor in catalysis. The active-site Shared with catalytic histidine of dimeric partner is the tyrosine 181. Lysine 185 acts as the Proton acceptor; shared with catalytic histidine of dimeric partner in catalysis.

The protein belongs to the poxin family. Homodimer.

The catalysed reaction is 2',3'-cGAMP + H2O = Gp(2'-5')Ap(3') + H(+). Nuclease that cleaves host 2',3'-cGAMP. This is Poxin (P26) from Lepidoptera (butterflies and moths).